The following is a 223-amino-acid chain: Ribose-5-phosphate isomerase A (223 aa).

Residues 26–29 (TGST), 82–85 (DGAD), and 95–98 (KGGG) contribute to the substrate site. The active-site Proton acceptor is E104. A substrate-binding site is contributed by K122.

It belongs to the ribose 5-phosphate isomerase family. Homodimer.

It carries out the reaction aldehydo-D-ribose 5-phosphate = D-ribulose 5-phosphate. It functions in the pathway carbohydrate degradation; pentose phosphate pathway; D-ribose 5-phosphate from D-ribulose 5-phosphate (non-oxidative stage): step 1/1. Its function is as follows. Catalyzes the reversible conversion of ribose-5-phosphate to ribulose 5-phosphate. This chain is Ribose-5-phosphate isomerase A, found in Streptococcus agalactiae serotype III (strain NEM316).